A 1465-amino-acid chain; its full sequence is Ankyrin and armadillo repeat-containing protein (1465 aa).

The helical transmembrane segment at 313–329 (MGYLKLICFLIPFLLSL) threads the bilayer. 5 ANK repeats span residues 532–561 (AGYA…NVNQ), 582–611 (NGPT…DYTL), 615–644 (RGWM…SLLE), 651–680 (NQCT…NWRK), and 684–714 (KGNN…ELPV). 6 ARM repeats span residues 745-784 (DRYW…NIST), 786-825 (VSIV…DVAK), 827-865 (ENKD…VLCM), 868-907 (ESNQ…EVAR), 910-949 (KEVQ…SLAN), and 1085-1125 (PMSQ…CIVL). The tract at residues 1431–1465 (KLGKDEQKANPDPPAFLNKLGKDEQNANPDPAESQ) is disordered.

The protein resides in the membrane. This Mus musculus (Mouse) protein is Ankyrin and armadillo repeat-containing protein (Ankar).